A 123-amino-acid polypeptide reads, in one-letter code: Ferredoxin-5 (123 aa).

The 118-residue stretch at 2 to 119 folds into the 2Fe-2S ferredoxin-type domain; that stretch reads PNITFTSPIM…DVMVHFTGTP (118 aa). Residues C42, C47, C50, and C102 each coordinate [2Fe-2S] cluster.

The protein belongs to the 2Fe2S plant-type ferredoxin family. It depends on [2Fe-2S] cluster as a cofactor.

In terms of biological role, ferredoxins are iron-sulfur proteins that transfer electrons in a wide variety of metabolic reactions. This ferredoxin probably participates in nitrogen fixation. The chain is Ferredoxin-5 (fdxD) from Rhodobacter capsulatus (Rhodopseudomonas capsulata).